The primary structure comprises 701 residues: MEEKSLLQKLRSYPPAVFFMLGNEFCERFSFYGMKTILFIYLITEHEFSPSKATFIYHLFTCIAYLTPLIGSIMADSVFGRFKVILYGSSIYVVGHVLLSLGAVPFLSYPIRSSLDFSGLFVIAFATGCIKPCVSAFAADQFTEDQKDLRSQFFSFFYFAINGGSLFAIIITPILRGRVQCFGNAHCFPLAFGVPGVLMLLALILFLMGWSMYKKHPPSKENVGSKVVAVIYTSLRKMVGGASRDKPVTHWLDHAAPEHSQKMIDSTRGLLNVAVIFCPLIFFWALFDQQGSTWVLQARRLDGRVGHFSILPEQIHAINPVCVLILVPIFEGWVYPALRKITRVTPLRKMAVGGLLTAFSFAIAGVLQLKVNETMEFPPSLGRIYLQRVGNESLISDFRYKSDGRLIGDGMLPKGRTELDAGIYTFNTGLKNESQEIDISTPNKGYVMAVFRLKDAVEVVKFDYKVEKTDNGATRVFVVTAREDADTLVYAINKKGKILSSCELKSGSYVDVIPGIISDPNVRLYWGPKNSCSGVDCPNTVTLNAQMGAVHVLHIHPSTTEGDFNLLVRPNSVSILWSLPQYIIITLGEVLLSVTGLEFAYSQAAPNMKSVLTAMWLLTVFAGNLIDMMISGTRLIPHPALEFFFYSTLMVIVMGVFILLAMQYTYVEDNDDEITITESEKKDVIALTEIESGTATSDKKE.

Helical transmembrane passes span 29–49 (FSFYGMKTILFIYLITEHEFS), 55–75 (FIYHLFTCIAYLTPLIGSIMA), 91–111 (IYVVGHVLLSLGAVPFLSYPI), 119–139 (GLFVIAFATGCIKPCVSAFAA), 154–174 (FSFFYFAINGGSLFAIIITPI), 188–208 (FPLAFGVPGVLMLLALILFLM), 269–289 (GLLNVAVIFCPLIFFWALFDQ), 318–338 (INPVCVLILVPIFEGWVYPAL), and 351–371 (AVGGLLTAFSFAIAGVLQLKV). Residues Asn-391 and Asn-432 are each glycosylated (N-linked (GlcNAc...) asparagine). Transmembrane regions (helical) follow at residues 575 to 595 (ILWSLPQYIIITLGEVLLSVT), 611 to 631 (VLTAMWLLTVFAGNLIDMMIS), and 641 to 661 (LEFFFYSTLMVIVMGVFILLA).

The protein belongs to the major facilitator superfamily. Proton-dependent oligopeptide transporter (POT/PTR) (TC 2.A.17) family. As to expression, expressed in the AVA interneuron.

It is found in the membrane. Functionally, neuron-specific, H(+)-coupled oligopeptide transporter with broad specificity towards di- and tripeptides in a Na(+) and Cl(-)-independent manner. Shows H(+) channel activity in the absence of peptide substrates. This Caenorhabditis elegans protein is Peptide transporter 3 (pept-3).